Reading from the N-terminus, the 679-residue chain is Methionine--tRNA ligase (679 aa).

The 'HIGH' region motif lies at 15–25 (PYANGPVHIGH). Zn(2+) contacts are provided by Cys-147, Cys-150, Cys-160, and Cys-163. Residues 332–336 (KISTS) carry the 'KMSKS' region motif. Thr-335 contacts ATP. The tRNA-binding domain maps to 578–679 (DFMKLDIRVG…KEVKPGSEVK (102 aa)).

Belongs to the class-I aminoacyl-tRNA synthetase family. MetG type 1 subfamily. As to quaternary structure, homodimer. Requires Zn(2+) as cofactor.

The protein localises to the cytoplasm. The catalysed reaction is tRNA(Met) + L-methionine + ATP = L-methionyl-tRNA(Met) + AMP + diphosphate. Is required not only for elongation of protein synthesis but also for the initiation of all mRNA translation through initiator tRNA(fMet) aminoacylation. The sequence is that of Methionine--tRNA ligase from Parabacteroides distasonis (strain ATCC 8503 / DSM 20701 / CIP 104284 / JCM 5825 / NCTC 11152).